We begin with the raw amino-acid sequence, 598 residues long: Terpenoid synthase 1 (598 aa).

Mg(2+) contacts are provided by Asp362, Asp366, Asn494, and Asp502. The DDXXD motif signature appears at 362 to 366 (DDTCD).

The protein belongs to the terpene synthase family. Tpsa subfamily. The cofactor is Mg(2+). Mn(2+) is required as a cofactor. In terms of tissue distribution, expressed exclusively in siliques.

Its subcellular location is the cytoplasm. It functions in the pathway secondary metabolite biosynthesis; terpenoid biosynthesis. The sequence is that of Terpenoid synthase 1 (TPS01) from Arabidopsis thaliana (Mouse-ear cress).